A 1376-amino-acid polypeptide reads, in one-letter code: MVPGEENQLVPKEDVFWRCRQNIFDEMKKKFLQIENAAEEPRVLCIIQDTTNSKTVSERITLNLPASTPVRKLFEDVANKVGYINGTFDLTRENGVTTADMAPLDHTSDKSLLDANFEPGKKNFLHLTDKDGEPPQMLLEDSNNVDDSVHDRFIGPLPREGSVASTNDYVSQNYSYSSILNKSETGYVGLVNQAMTCYLNSLLQTLFMTPEFRNALYKWEFEDSEEDPVTSIPYQLQRLFVLLQTSKKRAIETTDVTRSFGWDSSEAWQQHDVQELCRVMFDALEQKWKQTEQADLINELYQGKLKDYVRCLECGYEGWRIDTYLDIPLVIRPYGSSQAFASVEEALHAFIQPEILDGPNQYFCERCKKKCDARKGLRFLHFPYLLTLQLKRFDFDYTTMHRIKLNDRMSFPEELDMSTFIDIEDEKSPQTESCTDSGAENEGSCHSDQMSNDFSTDDAVDEGICLESSSGSEKISKPGLEKNSLMYELFSVMVHSGSAAGGHYYACIKSFSDDQWYSFNDQHVSRITQEDIKKTHGGSSGSRGYYSSAFASSTNAYMLIYRLKDPTRNAKFLEVDEYPEHIKNLVQKERELEEQEKRQREIERNTCKIKLFCLHPVKQVMMENKLEVHKDKTLKEAVEMAYKMMDLEDVIPLDCCRLVKYDEFHDYLERSYEGEEDTPMGLLLGGVKSTYMFDLLLETRKPDQIFQSYKPGEVMVKVHVVDLKAETVAAPVTVRAYLNQTVTEFKQLISKATHLPADSMRIVLERCYNDLRLLSMPSKTLKAEGFFRSNKVFVESSETVDHQAAFTDSHLWKLLDRHANTIRLFVLLPEQSPGSYSKRTAYQKAGGDSGNVDDDCERVKGPAGNLKSVDAILEESTEKLKSLSLQQQQQDGDNGDSSKSTETSDFENIESPLNERGSSTSVDNRELEQHIQTSDPENFQSEERSDSDVNNDRSTSSVDSDILSSSHSSDTLCNADSAQIPLANGLDSHSITSSRRTKANEGKKETWDTAEEDSGTDSEYDESGKSRGDMQYMYFKADPYTADEGSGEGHKWLMVHVDKRITLAAFKQHLEPFVGVLSSHFKVFRVYTSNQEFETVRLNETLSSFSDDNKITIRLGRALKKGEYRVKVCQLLVNEQEPCKFLLDAVFAKGMTVRQSKEELIPQLREQCGLDLSIDRFRLRKKTWKNPGTVFLDYHIYEEDINISSNWEVFLEVLDGVEKMKSMSQLAILTRRWRPAEMKLDPFQELVLESNSVDELREKLSEISGIPLEDIEFAKGRGTFPCDISVLDIHQDLDWNPKVSTLNVWPLYICDDGAVIFYRDRTEEVMELTDEQRNELMKKESSRLQKTGHRVTYSPRKEKALKIYLDGAPNKDVAQD.

Lys122 carries the N6-acetyllysine modification. Residues Val188–Lys564 enclose the USP domain. Cys197 functions as the Nucleophile in the catalytic mechanism. Positions Glu426–Asn452 are disordered. Residues Gln430–Asn452 show a composition bias toward polar residues. His503 functions as the Proton acceptor in the catalytic mechanism. Ser832 carries the phosphoserine modification. 3 disordered regions span residues Ser835 to Ala863, Leu880 to Thr971, and Gly985 to Lys1025. Low complexity predominate over residues Ser882 to Ser900. Phosphoserine is present on residues Ser911 and Ser934. Polar residues predominate over residues His930–Phe939. Residues Ser941–Asn951 show a composition bias toward basic and acidic residues. The span at Ser954–Asp970 shows a compositional bias: low complexity. Basic and acidic residues predominate over residues Lys998–Trp1007. Positions Asp1008–Asp1021 are enriched in acidic residues. Ser1014 carries the phosphoserine modification. The residue at position 1016 (Thr1016) is a Phosphothreonine. Ser1018 carries the post-translational modification Phosphoserine.

The protein belongs to the peptidase C19 family. USP47 subfamily. As to quaternary structure, interacts with BTRC and FBXW11. Interacts with POLB.

It localises to the cytoplasm. It carries out the reaction Thiol-dependent hydrolysis of ester, thioester, amide, peptide and isopeptide bonds formed by the C-terminal Gly of ubiquitin (a 76-residue protein attached to proteins as an intracellular targeting signal).. Functionally, ubiquitin-specific protease that specifically deubiquitinates monoubiquitinated DNA polymerase beta (POLB), stabilizing POLB thereby playing a role in base-excision repair (BER). Acts as a regulator of cell growth and genome integrity. May also indirectly regulate CDC25A expression at a transcriptional level. This is Ubiquitin carboxyl-terminal hydrolase 47 (Usp47) from Mus musculus (Mouse).